The primary structure comprises 109 residues: Prothymosin alpha (109 aa).

Residues 1-109 (MSDTSVDASV…AKKQKTDDDD (109 aa)) are disordered. A compositionally biased stretch (basic and acidic residues) spans 9–35 (SVEKTTKDLKSKDKELVEETENGKDKP). Acidic residues predominate over residues 41-81 (ENEENGEDGADNEEEEEVDEEDEEDEGEGDDDEGDEDDEAD). Positions 99-109 (DAKKQKTDDDD) are enriched in basic and acidic residues.

Belongs to the pro/parathymosin family. As to expression, highly expressed in the testis.

Its subcellular location is the nucleus. Its function is as follows. May have role in testicular activity. This chain is Prothymosin alpha, found in Pelophylax lessonae (Pool frog).